The primary structure comprises 37 residues: Large ribosomal subunit protein bL36c (37 aa).

Belongs to the bacterial ribosomal protein bL36 family.

It is found in the plastid. The protein resides in the chloroplast. The chain is Large ribosomal subunit protein bL36c from Vitis vinifera (Grape).